A 245-amino-acid chain; its full sequence is Ribonuclease PH (245 aa).

Phosphate-binding positions include Arg-87 and 125–127 (GTR).

The protein belongs to the RNase PH family. As to quaternary structure, homohexameric ring arranged as a trimer of dimers.

The enzyme catalyses tRNA(n+1) + phosphate = tRNA(n) + a ribonucleoside 5'-diphosphate. In terms of biological role, phosphorolytic 3'-5' exoribonuclease that plays an important role in tRNA 3'-end maturation. Removes nucleotide residues following the 3'-CCA terminus of tRNAs; can also add nucleotides to the ends of RNA molecules by using nucleoside diphosphates as substrates, but this may not be physiologically important. Probably plays a role in initiation of 16S rRNA degradation (leading to ribosome degradation) during starvation. The protein is Ribonuclease PH of Streptomyces griseus subsp. griseus (strain JCM 4626 / CBS 651.72 / NBRC 13350 / KCC S-0626 / ISP 5235).